Here is a 957-residue protein sequence, read N- to C-terminus: MTQTLSHLENRDAFIERHIGPGVDQQQEMLRTVGADSLDALISQIVPADIQLATPPDVGDAATEFAALAELKAIAGRNKRFKNYIGMGYTAVHTPPVILRNMLENPGWYTAYTPYQPEVSQGRLEALLNFQQVTLDLTGLDIASASLLDEATAAAEAMAMAKRVSKLKNANRFFVAADVHPQTLDVVRTRAETFGFEVIVDDAPKALDHQDLFGVLLQQVGTTGEVHDYRELISELKSRKVIVSVAADFMALVLLTAPGKQGADIVFGSAQRFGVPMGYGGPHAAFFAASDEFKRSMPGRIIGVSKDAAGRTALRMAMQTREQHIRREKANSNICTSQVLLANIASLYAVFHGPAGLKRIASRIHRFADILAAGLQHKGLKLRHATWFDTLCVEVADKATVLARAEASEINLRSDIPGAVGITLDETTTRADVQALLRVVTGEDATFDIDALDKEVAHDSRSIPAAMLRDDAILTHPVFNRYHSETEMMRYMHSLERKDLALNQAMIPLGSCTMKLNAAAEMIPITWPEFAELHPFCPADQAEGYLQMISQLSDWLVKLTGYDALCMQPNSGAQGEYAGLLAIRHYHESRNEGHRDICLIPSSAHGTNPASAQMAGMQVVVVACDKQGNIDLADLRAKAETAGDKLSCIMVTYPSTHGVYEETIREVCDIVHQYGGQVYLDGANMNAQVGITSPGYIGADVSHLNLHKTFCIPHGGGGPGMGPIGVKAHLAPFVPGHSVVQIEGMLTSQGAVSAAPFGSASILPISWMYIRMMGSQGLKKASQTAILNANYIASRLKDAYPVLYTGRDGRVAHECILDIRPLKEATGISELDIAKRLIDYGFHAPTMSFPVAGTLMVEPTESESKVELDRFIDAMLAIRGEIDRVAQGEWPQDDNPLVNAPHVQRELAQEWEHAYSRELAAFPAGFENKYWPTVKRLDDVYGDRNLFCSCVPMSEYQ.

Lys708 is modified (N6-(pyridoxal phosphate)lysine).

Belongs to the GcvP family. As to quaternary structure, the glycine cleavage system is composed of four proteins: P, T, L and H. Pyridoxal 5'-phosphate is required as a cofactor.

The catalysed reaction is N(6)-[(R)-lipoyl]-L-lysyl-[glycine-cleavage complex H protein] + glycine + H(+) = N(6)-[(R)-S(8)-aminomethyldihydrolipoyl]-L-lysyl-[glycine-cleavage complex H protein] + CO2. Functionally, the glycine cleavage system catalyzes the degradation of glycine. The P protein binds the alpha-amino group of glycine through its pyridoxal phosphate cofactor; CO(2) is released and the remaining methylamine moiety is then transferred to the lipoamide cofactor of the H protein. This Cronobacter sakazakii (strain ATCC BAA-894) (Enterobacter sakazakii) protein is Glycine dehydrogenase (decarboxylating).